Consider the following 216-residue polypeptide: Ribosomal RNA small subunit methyltransferase G (216 aa).

Residues Gly-82, Leu-87, 135-136 (AE), and Arg-148 each bind S-adenosyl-L-methionine.

The protein belongs to the methyltransferase superfamily. RNA methyltransferase RsmG family.

It localises to the cytoplasm. It catalyses the reaction guanosine(527) in 16S rRNA + S-adenosyl-L-methionine = N(7)-methylguanosine(527) in 16S rRNA + S-adenosyl-L-homocysteine. Its function is as follows. Specifically methylates the N7 position of guanine in position 527 of 16S rRNA. This Caulobacter vibrioides (strain ATCC 19089 / CIP 103742 / CB 15) (Caulobacter crescentus) protein is Ribosomal RNA small subunit methyltransferase G.